Reading from the N-terminus, the 376-residue chain is Enoyl-[acyl-carrier-protein] reductase, mitochondrial (376 aa).

The transit peptide at 1-12 (MLRTLRTSQLAR) directs the protein to the mitochondrion. Tyrosine 79 serves as the catalytic Proton donor. NADP(+) contacts are provided by residues asparagine 160, 183-186 (NSGV), 206-208 (RDR), 277-280 (YGGM), 302-304 (YWL), and lysine 368.

Belongs to the zinc-containing alcohol dehydrogenase family. Quinone oxidoreductase subfamily. Homodimer.

It localises to the mitochondrion matrix. The catalysed reaction is a 2,3-saturated acyl-[ACP] + NADP(+) = a (2E)-enoyl-[ACP] + NADPH + H(+). In terms of biological role, catalyzes the NADPH-dependent reduction of trans-2-enoyl thioesters in mitochondrial fatty acid synthesis (fatty acid synthesis type II). Fatty acid chain elongation in mitochondria uses acyl carrier protein (ACP) as an acyl group carrier, but the enzyme accepts both ACP and CoA thioesters as substrates in vitro. Required for respiration and the maintenance of the mitochondrial compartment. The sequence is that of Enoyl-[acyl-carrier-protein] reductase, mitochondrial (ETR1) from Yarrowia lipolytica (strain CLIB 122 / E 150) (Yeast).